A 426-amino-acid polypeptide reads, in one-letter code: Dihydrofolate synthase/folylpolyglutamate synthase (426 aa).

Residue 58-61 (GKGS) participates in ATP binding. Residue serine 82 participates in Mg(2+) binding. 121-124 (TRFE) lines the 7,8-dihydropteroate pocket. Residue glutamate 145 participates in Mg(2+) binding. 152–154 (LDA) contributes to the 7,8-dihydropteroate binding site. Position 172 (histidine 172) interacts with Mg(2+). The ATP site is built by arginine 289 and aspartate 302.

It belongs to the folylpolyglutamate synthase family. Monomer. Mg(2+) serves as cofactor.

It carries out the reaction 7,8-dihydropteroate + L-glutamate + ATP = 7,8-dihydrofolate + ADP + phosphate + H(+). The catalysed reaction is (6S)-5,6,7,8-tetrahydrofolyl-(gamma-L-Glu)(n) + L-glutamate + ATP = (6S)-5,6,7,8-tetrahydrofolyl-(gamma-L-Glu)(n+1) + ADP + phosphate + H(+). It catalyses the reaction 10-formyltetrahydrofolyl-(gamma-L-Glu)(n) + L-glutamate + ATP = 10-formyltetrahydrofolyl-(gamma-L-Glu)(n+1) + ADP + phosphate + H(+). The enzyme catalyses (6R)-5,10-methylenetetrahydrofolyl-(gamma-L-Glu)(n) + L-glutamate + ATP = (6R)-5,10-methylenetetrahydrofolyl-(gamma-L-Glu)(n+1) + ADP + phosphate + H(+). Its pathway is cofactor biosynthesis; tetrahydrofolate biosynthesis; 7,8-dihydrofolate from 2-amino-4-hydroxy-6-hydroxymethyl-7,8-dihydropteridine diphosphate and 4-aminobenzoate: step 2/2. It functions in the pathway cofactor biosynthesis; tetrahydrofolylpolyglutamate biosynthesis. In terms of biological role, functions in two distinct reactions of the de novo folate biosynthetic pathway. Catalyzes the addition of a glutamate residue to dihydropteroate (7,8-dihydropteroate or H2Pte) to form dihydrofolate (7,8-dihydrofolate monoglutamate or H2Pte-Glu). Also catalyzes successive additions of L-glutamate to tetrahydrofolate or 10-formyltetrahydrofolate or 5,10-methylenetetrahydrofolate, leading to folylpolyglutamate derivatives. This Buchnera aphidicola subsp. Baizongia pistaciae (strain Bp) protein is Dihydrofolate synthase/folylpolyglutamate synthase (folC).